The primary structure comprises 192 residues: Peptidyl-tRNA hydrolase (192 aa).

Y14 lines the tRNA pocket. Catalysis depends on H19, which acts as the Proton acceptor. TRNA-binding residues include Y66 and N68.

This sequence belongs to the PTH family. As to quaternary structure, monomer.

The protein resides in the cytoplasm. It catalyses the reaction an N-acyl-L-alpha-aminoacyl-tRNA + H2O = an N-acyl-L-amino acid + a tRNA + H(+). In terms of biological role, hydrolyzes ribosome-free peptidyl-tRNAs (with 1 or more amino acids incorporated), which drop off the ribosome during protein synthesis, or as a result of ribosome stalling. Functionally, catalyzes the release of premature peptidyl moieties from peptidyl-tRNA molecules trapped in stalled 50S ribosomal subunits, and thus maintains levels of free tRNAs and 50S ribosomes. This Coprothermobacter proteolyticus (strain ATCC 35245 / DSM 5265 / OCM 4 / BT) protein is Peptidyl-tRNA hydrolase.